A 113-amino-acid chain; its full sequence is Virion membrane protein A21 homolog (113 aa).

The chain crosses the membrane as a helical; Signal-anchor for type III membrane protein span at residues 1 to 23 (MFVLFLIVCYFILIFNIIVPKIA). At 24-113 (DKLRLEHEAF…CERAYTELFL (90 aa)) the chain is on the virion surface side.

The protein belongs to the chordopoxvirinae A21 family. As to quaternary structure, envelope protein part of a stable entry-fusion complex (EFC) which is at least composed of proteins A16, A21, A28, G3, G9, H2, J5, and L5. Formation of the viral membrane is necessary for the assembly of the complex. Post-translationally, contains two intramolecular disulfide bonds. They are created by the viral disulfide bond formation pathway, a poxvirus-specific pathway that operates on the cytoplasmic side of the MV membranes.

It localises to the virion membrane. Its function is as follows. Envelope protein part of the entry-fusion complex responsible for the virus membrane fusion with host cell membrane during virus entry. This Vertebrata (FPV) protein is Virion membrane protein A21 homolog.